The primary structure comprises 356 residues: S-adenosylmethionine:tRNA ribosyltransferase-isomerase (356 aa).

It belongs to the QueA family. In terms of assembly, monomer.

Its subcellular location is the cytoplasm. The enzyme catalyses 7-aminomethyl-7-carbaguanosine(34) in tRNA + S-adenosyl-L-methionine = epoxyqueuosine(34) in tRNA + adenine + L-methionine + 2 H(+). It functions in the pathway tRNA modification; tRNA-queuosine biosynthesis. Transfers and isomerizes the ribose moiety from AdoMet to the 7-aminomethyl group of 7-deazaguanine (preQ1-tRNA) to give epoxyqueuosine (oQ-tRNA). This chain is S-adenosylmethionine:tRNA ribosyltransferase-isomerase, found in Chromohalobacter salexigens (strain ATCC BAA-138 / DSM 3043 / CIP 106854 / NCIMB 13768 / 1H11).